We begin with the raw amino-acid sequence, 539 residues long: 3-methylmercaptopropionyl-CoA ligase (539 aa).

T185 is a binding site for Mg(2+). 5 residues coordinate ATP: H231, G303, H324, A325, and S329. E330 serves as a coordination point for Mg(2+). 4 residues coordinate ATP: Q359, D417, R432, and K523.

It belongs to the ATP-dependent AMP-binding enzyme family. As to quaternary structure, homodimer. Mg(2+) is required as a cofactor.

The enzyme catalyses 3-(methylsulfanyl)propanoate + ATP + CoA = 3-(methylsulfanyl)propanoyl-CoA + AMP + diphosphate. Its pathway is lipid metabolism; fatty acid metabolism. With respect to regulation, activated by LiCl and NH(4)Cl. Inhibited by dimethylsulfoniopropionate (DMSP). MMPA concentrations above 2 mM relieve the DMSP inhibition and 80% of activity is regained at an MMPA concentration of 8 mM. Its function is as follows. Involved in the assimilation of dimethylsulphoniopropionate (DMSP), an important compound in the fixation of carbon in marine phytoplankton. Catalyzes the ATP-dependent ligation of methylmercaptopropionate (MMPA) and CoA to yield methylmercaptopropionate-CoA (MMPA-CoA). It is also active with short-chain-fatty-acid (carboxylic acids up to six carbons in length). This chain is 3-methylmercaptopropionyl-CoA ligase, found in Ruegeria pomeroyi (strain ATCC 700808 / DSM 15171 / DSS-3) (Silicibacter pomeroyi).